A 388-amino-acid polypeptide reads, in one-letter code: Succinate--CoA ligase [ADP-forming] subunit beta (388 aa).

Residues lysine 46, 53–55 (GRG), glutamate 99, cysteine 102, and glutamate 107 each bind ATP. 2 residues coordinate Mg(2+): asparagine 199 and aspartate 213. Substrate is bound by residues asparagine 264 and 321-323 (GIV).

The protein belongs to the succinate/malate CoA ligase beta subunit family. As to quaternary structure, heterotetramer of two alpha and two beta subunits. It depends on Mg(2+) as a cofactor.

The catalysed reaction is succinate + ATP + CoA = succinyl-CoA + ADP + phosphate. It catalyses the reaction GTP + succinate + CoA = succinyl-CoA + GDP + phosphate. It participates in carbohydrate metabolism; tricarboxylic acid cycle; succinate from succinyl-CoA (ligase route): step 1/1. In terms of biological role, succinyl-CoA synthetase functions in the citric acid cycle (TCA), coupling the hydrolysis of succinyl-CoA to the synthesis of either ATP or GTP and thus represents the only step of substrate-level phosphorylation in the TCA. The beta subunit provides nucleotide specificity of the enzyme and binds the substrate succinate, while the binding sites for coenzyme A and phosphate are found in the alpha subunit. This chain is Succinate--CoA ligase [ADP-forming] subunit beta, found in Actinobacillus pleuropneumoniae serotype 7 (strain AP76).